A 436-amino-acid polypeptide reads, in one-letter code: Adenylyltransferase and sulfurtransferase UBA4 (436 aa).

ATP contacts are provided by residues Gly74, Asp95, 102 to 106 (SNLHR), Lys119, and 163 to 164 (DT). Zn(2+)-binding residues include Cys205 and Cys208. The active-site Glycyl thioester intermediate; for adenylyltransferase activity is Cys222. The Zn(2+) site is built by Cys283 and Cys286. The Rhodanese domain maps to 335 to 434 (NEKDHILIDV…YIDEEDHSYP (100 aa)). Residue Cys393 is the Cysteine persulfide intermediate; for sulfurtransferase activity of the active site.

In the N-terminal section; belongs to the HesA/MoeB/ThiF family. UBA4 subfamily. The cofactor is Zn(2+).

The protein resides in the cytoplasm. It localises to the cytosol. Its pathway is tRNA modification; 5-methoxycarbonylmethyl-2-thiouridine-tRNA biosynthesis. Its function is as follows. Plays a central role in 2-thiolation of mcm(5)S(2)U at tRNA wobble positions of cytosolic tRNA(Lys), tRNA(Glu) and tRNA(Gln). Acts by mediating the C-terminal thiocarboxylation of sulfur carrier URM1. Its N-terminus first activates URM1 as acyl-adenylate (-COAMP), then the persulfide sulfur on the catalytic cysteine is transferred to URM1 to form thiocarboxylation (-COSH) of its C-terminus. The reaction probably involves hydrogen sulfide that is generated from the persulfide intermediate and that acts as a nucleophile towards URM1. Subsequently, a transient disulfide bond is formed. Does not use thiosulfate as sulfur donor; NFS1 probably acting as a sulfur donor for thiocarboxylation reactions. Prior mcm(5) tRNA modification by the elongator complex is required for 2-thiolation. May also be involved in protein urmylation. This chain is Adenylyltransferase and sulfurtransferase UBA4, found in Vanderwaltozyma polyspora (strain ATCC 22028 / DSM 70294 / BCRC 21397 / CBS 2163 / NBRC 10782 / NRRL Y-8283 / UCD 57-17) (Kluyveromyces polysporus).